The sequence spans 527 residues: Amino acid transporter heavy chain SLC3A2 (527 aa).

The interval 1–31 (MSQDTEVDMKDVELNELEPEKQPMNAADGAA) is disordered. Topologically, residues 1–75 (MSQDTEVDMK…AGSPGWVRTR (75 aa)) are cytoplasmic. Ser2 is modified (phosphoserine). Thr5 is modified (phosphothreonine). Positions 7 to 21 (VDMKDVELNELEPEK) are enriched in basic and acidic residues. Residue Lys42 forms a Glycyl lysine isopeptide (Lys-Gly) (interchain with G-Cter in ubiquitin) linkage. Phosphoserine is present on Ser58. Lys59 participates in a covalent cross-link: Glycyl lysine isopeptide (Lys-Gly) (interchain with G-Cter in SUMO2). A helical; Signal-anchor for type II membrane protein transmembrane segment spans residues 76–98 (WALLLLFWLGWLGMLAGAVVIIV). Topologically, residues 99-527 (RAPRCRELPV…GLLLQFPFVA (429 aa)) are extracellular. N-linked (GlcNAc...) asparagine glycans are attached at residues Asn166, Asn249, Asn259, and Asn263. Residue Ser300 is modified to Phosphoserine. Asn318, Asn386, and Asn400 each carry an N-linked (GlcNAc...) asparagine glycan. Ser421 carries the post-translational modification Phosphoserine. Asn510 carries an N-linked (GlcNAc...) asparagine glycan.

This sequence belongs to the SLC3A transporter family. Disulfide-linked heterodimer with a non-glycosylated light chain (SLC7A5, SLC7A6, SLC7A7, SLC7A8, SLC7A10 or SLC7A11). Interacts with TLCD3A/CT120 and ICAM1. Constitutively and specifically associates with beta-1 integrins (alpha-2/beta-1, alpha-3/beta-1, alpha-5/beta-1 and alpha-6/beta-1), but minimally with alpha-4/beta-1. Interacts with LAPTM4B; recruits SLC3A2 and SLC7A5 to lysosomes to promote leucine uptake into these organelles and is required for mTORC1 activation. Post-translationally, phosphorylation on Ser-300 and on Ser-421 by ecto-protein kinases favors heterotypic cell-cell interactions. N-glycosylated; N-glycosylation is crucial for trafficking and stability of SLC3A2 to the plasma membrane. In terms of tissue distribution, in brain expressed on capillary endothelia in cerebral cortex (at protein level). Highest expression in kidney, jejunum, ileum, colon, placenta, testis and spleen. Lower levels found in liver, lung and brain with weakest expression in heart. Expressed in retina, inner blood-retinal barrier of retina, retinal vascular endothelial cells. Also expressed in C6 glioma cells and in the retinal capillary endothelial cell line TR-iBRB2.

Its subcellular location is the apical cell membrane. It localises to the cell membrane. It is found in the cell junction. The protein localises to the lysosome membrane. The protein resides in the melanosome. Its subcellular location is the basolateral cell membrane. Its function is as follows. Acts as a chaperone that facilitates biogenesis and trafficking of functional transporters heterodimers to the plasma membrane. Forms heterodimer with SLC7 family transporters (SLC7A5, SLC7A6, SLC7A7, SLC7A8, SLC7A10 and SLC7A11), a group of amino-acid antiporters. Heterodimers function as amino acids exchangers, the specificity of the substrate depending on the SLC7A subunit. Heterodimers formed by SLC3A2/SLC7A6 or SLC3A2/SLC7A7 mediate the uptake of dibasic amino acids. Heterodimer SLC3A2/SLC7A11 functions as an antiporter by mediating the exchange of extracellular anionic L-cystine and intracellular L-glutamate across the cellular plasma membrane. SLC3A2/SLC7A10 translocates small neutral L- and D-amino acids across the plasma membrane. SLC3A2/SLC75 or SLC3A2/SLC7A8 translocates neutral amino acids with broad specificity, thyroid hormones and L-DOPA. SLC3A2 is essential for plasma membrane localization, stability, and the transport activity of SLC7A5 and SLC7A8. When associated with LAPTM4B, the heterodimer SLC7A5 is recruited to lysosomes to promote leucine uptake into these organelles, and thereby mediates mTORC1 activation. Modulates integrin-related signaling and is essential for integrin-dependent cell spreading, migration and tumor progression. The chain is Amino acid transporter heavy chain SLC3A2 from Rattus norvegicus (Rat).